Here is an 86-residue protein sequence, read N- to C-terminus: Progonadoliberin-2 (86 aa).

A signal peptide spans 1–24; it reads MVSVCRLLLVAALLLCLQAQLSFS. The residue at position 25 (Gln25) is a Pyrrolidone carboxylic acid. Gly34 is subject to Glycine amide.

Belongs to the GnRH family.

It localises to the secreted. Stimulates the secretion of gonadotropins. The chain is Progonadoliberin-2 (gnrh2) from Clarias gariepinus (North African catfish).